Here is an 82-residue protein sequence, read N- to C-terminus: uncharacterized protein (82 aa).

The next 3 helical transmembrane spans lie at 4–26 (LDIAFFILPLGIMLLSIVGTCIC), 31–48 (LMPMLSLVISLVLTFTIF), and 52–74 (FLGWAVVYSLVSLALSYITLIVV).

The protein localises to the cell membrane. This is an uncharacterized protein from Bacillus subtilis (strain 168).